The sequence spans 97 residues: Cornifin (97 aa).

The tract at residues 1-42 (MSSQQQKQPCTPPPQPQQQQVKQPCQPPPQEPCVPKTKEPCH) is disordered. The residue at position 2 (Ser-2) is an N-acetylserine. 9 consecutive repeat copies span residues 3 to 14 (SQQQKQPCTPPP), 18 to 29 (QQQVKQPCQPPP), 31 to 38 (EPCVPKTK), 39 to 46 (EPCHPKVP), 47 to 54 (EPCQPKVP), 55 to 62 (EPCQPKVP), 63 to 70 (EPCHPKVP), 71 to 78 (EPCQPKVP), and 79 to 85 (EPCPSPV). The interval 3-29 (SQQQKQPCTPPPQPQQQQVKQPCQPPP) is 2 X 12 AA approximate repeats. The tract at residues 31–85 (EPCVPKTKEPCHPKVPEPCQPKVPEPCQPKVPEPCHPKVPEPCQPKVPEPCPSPV) is 7 X 8 AA approximate tandem repeats.

The protein belongs to the cornifin (SPRR) family. Not detected in normal lung tissue but seen in tumor tissues. Cells around the keratin pearls contain high levels.

The protein localises to the cytoplasm. Cross-linked envelope protein of keratinocytes. It is a keratinocyte protein that first appears in the cell cytosol, but ultimately becomes cross-linked to membrane proteins by transglutaminase. All that results in the formation of an insoluble envelope beneath the plasma membrane. This chain is Cornifin (SPRP), found in Sus scrofa (Pig).